Consider the following 206-residue polypeptide: Holliday junction branch migration complex subunit RuvA (206 aa).

A domain I region spans residues methionine 1–leucine 68. Residues glutamate 69–alanine 147 are domain II. Residues alanine 147–arginine 151 form a flexible linker region. A domain III region spans residues alanine 152 to glycine 206.

It belongs to the RuvA family. Homotetramer. Forms an RuvA(8)-RuvB(12)-Holliday junction (HJ) complex. HJ DNA is sandwiched between 2 RuvA tetramers; dsDNA enters through RuvA and exits via RuvB. An RuvB hexamer assembles on each DNA strand where it exits the tetramer. Each RuvB hexamer is contacted by two RuvA subunits (via domain III) on 2 adjacent RuvB subunits; this complex drives branch migration. In the full resolvosome a probable DNA-RuvA(4)-RuvB(12)-RuvC(2) complex forms which resolves the HJ.

The protein localises to the cytoplasm. In terms of biological role, the RuvA-RuvB-RuvC complex processes Holliday junction (HJ) DNA during genetic recombination and DNA repair, while the RuvA-RuvB complex plays an important role in the rescue of blocked DNA replication forks via replication fork reversal (RFR). RuvA specifically binds to HJ cruciform DNA, conferring on it an open structure. The RuvB hexamer acts as an ATP-dependent pump, pulling dsDNA into and through the RuvAB complex. HJ branch migration allows RuvC to scan DNA until it finds its consensus sequence, where it cleaves and resolves the cruciform DNA. The polypeptide is Holliday junction branch migration complex subunit RuvA (Gloeobacter violaceus (strain ATCC 29082 / PCC 7421)).